A 466-amino-acid chain; its full sequence is Putative proline/betaine transporter (466 aa).

Transmembrane regions (helical) follow at residues 20-42 (VVAT…YTTA), 63-83 (FAAL…FGII), 91-111 (VVLT…GLLP), 116-136 (IGLW…FSTG), 164-184 (IGTL…TFFL), 191-211 (SFGW…GLYL), 247-267 (IFVC…VTAY), 285-305 (VLIT…GKLA), 313-332 (VFLI…FMLL), 337-354 (FVVI…LSTY), 377-397 (VTFN…ATWL), and 405-425 (LAPA…ITFL).

This sequence belongs to the major facilitator superfamily. Metabolite:H+ Symporter (MHS) family (TC 2.A.1.6) family.

It is found in the cell membrane. Its function is as follows. May be a proton symporter involved in the uptake of osmolytes such as proline and glycine betaine. The polypeptide is Putative proline/betaine transporter (proP) (Staphylococcus aureus (strain Mu3 / ATCC 700698)).